The chain runs to 887 residues: Microsomal triglyceride transfer protein large subunit (887 aa).

The N-terminal stretch at 1 to 11 (FLCFISSYSAS) is a signal peptide. Residues 21 to 655 (LNNDRLYKLT…YIEKTPLHGI (635 aa)) form the Vitellogenin domain. A disulfide bond links Cys167 and Cys187.

As to quaternary structure, heterodimer; heterodimerizes with the protein disulfide isomerase (P4HB/PDI). Interacts with APOB. Interacts with PRAP1.

Its subcellular location is the endoplasmic reticulum. The protein localises to the golgi apparatus. The enzyme catalyses a 1,2-diacyl-sn-glycero-3-phosphocholine(in) = a 1,2-diacyl-sn-glycero-3-phosphocholine(out). It catalyses the reaction a 1,2-diacyl-sn-glycero-3-phosphoethanolamine(in) = a 1,2-diacyl-sn-glycero-3-phosphoethanolamine(out). It carries out the reaction a cholesterol ester(in) = a cholesterol ester(out). The catalysed reaction is a triacyl-sn-glycerol(in) = a triacyl-sn-glycerol(out). Catalyzes the transport of triglyceride, cholesteryl ester, and phospholipid between phospholipid surfaces. Required for the assembly and secretion of plasma lipoproteins that contain apolipoprotein B. May be involved in regulating cholesteryl ester biosynthesis in cells that produce lipoproteins. The sequence is that of Microsomal triglyceride transfer protein large subunit (MTTP) from Bos taurus (Bovine).